The following is a 90-amino-acid chain: Small ribosomal subunit protein bS16 (90 aa).

This sequence belongs to the bacterial ribosomal protein bS16 family.

This chain is Small ribosomal subunit protein bS16, found in Bacillus cytotoxicus (strain DSM 22905 / CIP 110041 / 391-98 / NVH 391-98).